A 222-amino-acid chain; its full sequence is TPR repeat-containing protein BH2049 (222 aa).

2 TPR repeats span residues 34–67 and 169–202; these read AEPL…NREH and PVGL…KEDK.

The polypeptide is TPR repeat-containing protein BH2049 (Halalkalibacterium halodurans (strain ATCC BAA-125 / DSM 18197 / FERM 7344 / JCM 9153 / C-125) (Bacillus halodurans)).